The primary structure comprises 287 residues: MAATAVNGVAGTSSSGSAAASGAILQAAAGMYEQLKGEWNRKSPNLSKCGEELGRLKLVLLELNFLPTTGTKLTKQQLILARDIQEIGAQWSILRKDIPSFERYMAQLKCYYFDYKEQLPESAYMHQLLGLNLLFLLSQNRVAEFHTELERLPAKDIQTNVYIKHPVSLEQYLMEGSYNKVFLAKGNIPAESYTFFIDILLDTIRDEIAGCIEKAYEKILFTEATRILFFNTPKKMTDYAKKRGWVLGINNYYSFASQQQKPEDTTIPSTELAKQVIEYARQLEMIV.

Serine 43 carries the post-translational modification Phosphoserine. Residues 99-268 (PSFERYMAQL…QQKPEDTTIP (170 aa)) form the PCI domain. A Glycyl lysine isopeptide (Lys-Gly) (interchain with G-Cter in SUMO2) cross-link involves residue lysine 234.

Belongs to the proteasome subunit S14 family. As to quaternary structure, component of the 19S proteasome regulatory particle complex. The 26S proteasome consists of a 20S core particle (CP) and two 19S regulatory subunits (RP). The regulatory particle is made of a lid composed of 9 subunits including PSMD8, a base containing 6 ATPases and few additional components. Interacts with DDI2. Interacts with TASOR.

Functionally, component of the 26S proteasome, a multiprotein complex involved in the ATP-dependent degradation of ubiquitinated proteins. This complex plays a key role in the maintenance of protein homeostasis by removing misfolded or damaged proteins, which could impair cellular functions, and by removing proteins whose functions are no longer required. Therefore, the proteasome participates in numerous cellular processes, including cell cycle progression, apoptosis, or DNA damage repair. The chain is 26S proteasome non-ATPase regulatory subunit 8 (PSMD8) from Bos taurus (Bovine).